The chain runs to 284 residues: Fructosamine kinase FrlD (284 aa).

This sequence belongs to the carbohydrate kinase PfkB family.

Its function is as follows. Catalyzes the phosphorylation of a range of fructosamines to fructosamine 6-phosphates. This Bacillus subtilis (strain 168) protein is Fructosamine kinase FrlD (frlD).